We begin with the raw amino-acid sequence, 608 residues long: Nuclear protein localization protein 4 homolog (608 aa).

Ala-2 is subject to N-acetylalanine. Lys-179 is modified (N6-acetyllysine). One can recognise an MPN domain in the interval 226–363 (IMFENHTVAD…MCRLSPDGHF (138 aa)). The RanBP2-type zinc finger occupies 580-608 (TAAMWACQHCTFMNQPGTGHCEMCSLPRT).

It belongs to the NPL4 family. In terms of assembly, heterodimer with UFD1. The heterodimer binds ubiquitinated proteins. The heterodimer binds to VCP and inhibits Golgi membrane fusion. Interacts with ZFAND2B; probably through VCP. As to expression, expressed at highest levels in brain, heart, skeletal muscle, kidney and fetal liver.

It is found in the cytoplasm. Its subcellular location is the cytosol. It localises to the endoplasmic reticulum. The protein localises to the nucleus. It participates in protein degradation; proteasomal ubiquitin-dependent pathway. The ternary complex containing UFD1, VCP and NPLOC4 binds ubiquitinated proteins and is necessary for the export of misfolded proteins from the ER to the cytoplasm, where they are degraded by the proteasome. The NPLOC4-UFD1-VCP complex regulates spindle disassembly at the end of mitosis and is necessary for the formation of a closed nuclear envelope. Acts as a negative regulator of type I interferon production via the complex formed with VCP and UFD1, which binds to RIGI and recruits RNF125 to promote ubiquitination and degradation of RIGI. This Homo sapiens (Human) protein is Nuclear protein localization protein 4 homolog (NPLOC4).